Reading from the N-terminus, the 387-residue chain is Patatin group D-3 (387 aa).

A signal peptide spans 1-23 (MATTKSFLILIVMILATTSSTFA). The PNPLA domain maps to 32–230 (LSIDGGGIKG…TVADPALLSI (199 aa)). A GXGXXG motif is present at residues 36–41 (GGGIKG). The GXSXG motif lies at 75–79 (GTSTG). Serine 77 acts as the Nucleophile in catalysis. N-linked (GlcNAc...) asparagine glycosylation occurs at asparagine 115. Aspartate 216 acts as the Proton acceptor in catalysis. Residues 216 to 218 (DGA) carry the DGA/G motif. A coiled-coil region spans residues 361 to 385 (ETYEEALKRFAKLLSDRKKLRANKA).

It belongs to the patatin family. Tuber.

Its subcellular location is the vacuole. Probable lipolytic acyl hydrolase (LAH), an activity which is thought to be involved in the response of tubers to pathogens. This is Patatin group D-3 from Solanum tuberosum (Potato).